The sequence spans 438 residues: MHPLPGYWSCYCLLLLFSLGVQGSLGAPSAAPEQVHLSYPGEPGSMTVTWTTWVPTRSEVQFGLQPSGPLPLRAQGTFVPFVDGGILRRKLYIHRVTLRKLLPGVQYVYRCGSAQGWSRRFRFRALKNGAHWSPRLAVFGDLGADNPKAVPRLRRDTQQGMYDAVLHVGDFAYNLDQDNARVGDRFMRLIEPVAASLPYMTCPGNHEERYNFSNYKARFSMPGDNEGLWYSWDLGPAHIISFSTEVYFFLHYGRHLVQRQFRWLESDLQKANKNRAARPWIITMGHRPMYCSNADLDDCTRHESKVRKGLQGKLYGLEDLFYKYGVDLQLWAHEHSYERLWPIYNYQVFNGSREMPYTNPRGPVHIITGSAGCEERLTPFAVFPRPWSAVRVKEYGYTRLHILNGTHIHIQQVSDDQDGKIVDDVWVVRPLFGRRMYL.

Residues M1–G26 form the signal peptide. Residues D141, D170, and Y173 each contribute to the Fe cation site. D170 lines the Zn(2+) pocket. Residue N205 coordinates Zn(2+). N211 carries an N-linked (GlcNAc...) asparagine glycan. 2 residues coordinate Zn(2+): H286 and H333. Fe cation is bound at residue H335. N-linked (GlcNAc...) asparagine glycans are attached at residues N350 and N404.

This sequence belongs to the metallophosphoesterase superfamily. Purple acid phosphatase family. Fe cation serves as cofactor. Requires Zn(2+) as cofactor.

The protein localises to the secreted. It carries out the reaction a phosphate monoester + H2O = an alcohol + phosphate. This Homo sapiens (Human) protein is Acid phosphatase type 7.